We begin with the raw amino-acid sequence, 69 residues long: Light-harvesting protein B-1015 beta chain (69 aa).

At 2–21 the chain is on the cytoplasmic side; that stretch reads ADLKPSLTGLTEEEAKEFHG. The a bacteriochlorophyll site is built by His20 and His38. Residues 22–44 traverse the membrane as a helical segment; the sequence is IFVTSTVLYLATAVIVHYLVWTA. The Periplasmic portion of the chain corresponds to 45–56; sequence RPWIAPIPKGWV. A propeptide spanning residues 57–69 is cleaved from the precursor; it reads NLEGVQSALSYLV.

Belongs to the antenna complex beta subunit family. The core complex is formed by different alpha and beta chains, binding bacteriochlorophyll molecules, and arranged most probably in tetrameric structures disposed around the reaction center. The non-pigmented gamma chains may constitute additional components.

The protein localises to the cell inner membrane. Functionally, antenna complexes are light-harvesting systems, which transfer the excitation energy to the reaction centers. This chain is Light-harvesting protein B-1015 beta chain (pufB), found in Blastochloris viridis (Rhodopseudomonas viridis).